The sequence spans 430 residues: Protein POLLENLESS 3-LIKE 2 (430 aa).

The tract at residues 1–21 is disordered; that stretch reads MMRDVFRPTKSAPCSPAKPLG. TPR repeat units lie at residues 40-73, 74-107, 110-143, 170-203, 205-236, and 238-257; these read DSPY…GDRV, DSAL…CSDQ, ESLD…IQKG, TRLL…APDN, KMCN…VVDG, and RGVD…LNDL. Residues 81-107 adopt a coiled-coil conformation; sequence AIVMKQQNRAEEAIEAIKSLRVRCSDQ. The disordered stretch occupies residues 346 to 376; that stretch reads KLKRTRSSSQGMGMLSGIGGDHEGETNTSTR.

Belongs to the MS5 protein family.

The protein localises to the nucleus. Functionally, probably involved in the regulation of cell division. This Arabidopsis thaliana (Mouse-ear cress) protein is Protein POLLENLESS 3-LIKE 2.